The primary structure comprises 324 residues: Porphobilinogen deaminase 1 (324 aa).

At Cys249 the chain carries S-(dipyrrolylmethanemethyl)cysteine.

This sequence belongs to the HMBS family. As to quaternary structure, monomer. It depends on dipyrromethane as a cofactor.

It catalyses the reaction 4 porphobilinogen + H2O = hydroxymethylbilane + 4 NH4(+). It participates in porphyrin-containing compound metabolism; protoporphyrin-IX biosynthesis; coproporphyrinogen-III from 5-aminolevulinate: step 2/4. Functionally, tetrapolymerization of the monopyrrole PBG into the hydroxymethylbilane pre-uroporphyrinogen in several discrete steps. The polypeptide is Porphobilinogen deaminase 1 (hemC1) (Streptomyces avermitilis (strain ATCC 31267 / DSM 46492 / JCM 5070 / NBRC 14893 / NCIMB 12804 / NRRL 8165 / MA-4680)).